The primary structure comprises 145 residues: Photosystem I reaction center subunit VI-1, chloroplastic (145 aa).

Residues 1 to 50 (MASLATVAAVKPSAAIKGLGGSSLAGAKLSIKPSRLSFKPKSIRANGVVA) constitute a chloroplast transit peptide. A helical membrane pass occupies residues 102 to 118 (LLLKFLILGGGSLLTYV).

The protein belongs to the psaH family.

The protein localises to the plastid. Its subcellular location is the chloroplast thylakoid membrane. In terms of biological role, possible role could be the docking of the LHC I antenna complex to the core complex. The polypeptide is Photosystem I reaction center subunit VI-1, chloroplastic (PSAH1) (Arabidopsis thaliana (Mouse-ear cress)).